A 338-amino-acid chain; its full sequence is Lipoate-protein ligase A (338 aa).

In terms of domain architecture, BPL/LPL catalytic spans 29 to 216 (PATQRVLFLW…AFFAYYGERV (188 aa)). Residues arginine 71, 76 to 79 (GAVF), and lysine 134 each bind ATP. (R)-lipoate is bound at residue lysine 134.

Belongs to the LplA family. As to quaternary structure, monomer.

It localises to the cytoplasm. The catalysed reaction is L-lysyl-[lipoyl-carrier protein] + (R)-lipoate + ATP = N(6)-[(R)-lipoyl]-L-lysyl-[lipoyl-carrier protein] + AMP + diphosphate + H(+). The protein operates within protein modification; protein lipoylation via exogenous pathway; protein N(6)-(lipoyl)lysine from lipoate: step 1/2. It participates in protein modification; protein lipoylation via exogenous pathway; protein N(6)-(lipoyl)lysine from lipoate: step 2/2. Functionally, catalyzes both the ATP-dependent activation of exogenously supplied lipoate to lipoyl-AMP and the transfer of the activated lipoyl onto the lipoyl domains of lipoate-dependent enzymes. This Cronobacter sakazakii (strain ATCC BAA-894) (Enterobacter sakazakii) protein is Lipoate-protein ligase A.